The sequence spans 1400 residues: DNA-directed RNA polymerase subunit beta' (1400 aa).

Residues Cys70, Cys72, Cys85, and Cys88 each contribute to the Zn(2+) site. 3 residues coordinate Mg(2+): Asp460, Asp462, and Asp464. Zn(2+) is bound by residues Cys814, Cys888, Cys895, and Cys898. The disordered stretch occupies residues 1367–1400; that stretch reads DRQAKRAEAQEGPSAEQATDNLAALLNAGFSSDE.

Belongs to the RNA polymerase beta' chain family. As to quaternary structure, the RNAP catalytic core consists of 2 alpha, 1 beta, 1 beta' and 1 omega subunit. When a sigma factor is associated with the core the holoenzyme is formed, which can initiate transcription. The cofactor is Mg(2+). Zn(2+) is required as a cofactor.

The catalysed reaction is RNA(n) + a ribonucleoside 5'-triphosphate = RNA(n+1) + diphosphate. In terms of biological role, DNA-dependent RNA polymerase catalyzes the transcription of DNA into RNA using the four ribonucleoside triphosphates as substrates. The chain is DNA-directed RNA polymerase subunit beta' from Vibrio campbellii (strain ATCC BAA-1116).